The chain runs to 529 residues: Probable anion transporter 1, chloroplastic (529 aa).

A chloroplast-targeting transit peptide spans 1–55; it reads MLYLLPLSVSCRVPGSPPAPRSRRFLDPGGGRGVGDGLGGVRVFRRRALRGTDVR. 2 disordered regions span residues 13–39 and 52–78; these read VPGS…DGLG and TDVR…GGYG. A compositionally biased stretch (gly residues) spans 28–39; it reads PGGGRGVGDGLG. Residues 67-76 show a composition bias toward basic and acidic residues; it reads RHDDARHDGG. The next 11 helical transmembrane spans lie at 120 to 140, 158 to 178, 187 to 207, 209 to 229, 251 to 271, 274 to 294, 340 to 360, 378 to 398, 418 to 438, 469 to 489, and 503 to 523; these read WAIV…RVNM, VGLI…AGGI, TVLG…PFAA, LGLP…GVAM, LVYS…PLLI, FGWP…FSTW, VWAL…LLTW, LFCV…GWIA, IGFL…SPAM, AGVL…FGTA, and VFKV…LFST.

The protein belongs to the major facilitator superfamily. Sodium/anion cotransporter (TC 2.A.1.14) family.

It is found in the plastid. The protein localises to the chloroplast membrane. In terms of biological role, probable anion transporter. The chain is Probable anion transporter 1, chloroplastic (PHT4;1) from Oryza sativa subsp. japonica (Rice).